Reading from the N-terminus, the 690-residue chain is Eukaryotic translation initiation factor 3 subunit B (690 aa).

Positions 1–11 (MAKKKSEDHSG) are enriched in basic and acidic residues. Positions 1-37 (MAKKKSEDHSGGDANDSDYNEEPNFEDPPNFVDNISD) are disordered. Positions 15–25 (NDSDYNEEPNF) are enriched in acidic residues. In terms of domain architecture, RRM spans 57–141 (SVVVVDNIPK…HTFAVNLFTD (85 aa)). WD repeat units lie at residues 207–246 (TRER…KIQK), 247–289 (FPHT…EKRS), 293–331 (DGMS…LLDL), 334–369 (IKIP…TLME), 442–484 (EIRE…KPSL), and 530–575 (PDHF…IKRT). Positions 614–645 (QKDRLRLTRASKELLEKRSQLRETFMEYRNKR) form a coiled coil.

The protein belongs to the eIF-3 subunit B family. In terms of assembly, component of the eukaryotic translation initiation factor 3 (eIF-3) complex. The eIF-3 complex interacts with pix. Interacts with mxt.

It localises to the cytoplasm. Its function is as follows. RNA-binding component of the eukaryotic translation initiation factor 3 (eIF-3) complex, which is involved in protein synthesis of a specialized repertoire of mRNAs and, together with other initiation factors, stimulates binding of mRNA and methionyl-tRNAi to the 40S ribosome. The eIF-3 complex specifically targets and initiates translation of a subset of mRNAs involved in cell proliferation. This chain is Eukaryotic translation initiation factor 3 subunit B, found in Drosophila pseudoobscura pseudoobscura (Fruit fly).